The chain runs to 362 residues: Peptide chain release factor 2 (362 aa).

N5-methylglutamine is present on Gln-250.

It belongs to the prokaryotic/mitochondrial release factor family. In terms of processing, methylated by PrmC. Methylation increases the termination efficiency of RF2.

It is found in the cytoplasm. Peptide chain release factor 2 directs the termination of translation in response to the peptide chain termination codons UGA and UAA. This chain is Peptide chain release factor 2, found in Clostridium perfringens (strain ATCC 13124 / DSM 756 / JCM 1290 / NCIMB 6125 / NCTC 8237 / Type A).